The chain runs to 343 residues: S-adenosylmethionine:tRNA ribosyltransferase-isomerase (343 aa).

This sequence belongs to the QueA family. Monomer.

The protein localises to the cytoplasm. It carries out the reaction 7-aminomethyl-7-carbaguanosine(34) in tRNA + S-adenosyl-L-methionine = epoxyqueuosine(34) in tRNA + adenine + L-methionine + 2 H(+). It participates in tRNA modification; tRNA-queuosine biosynthesis. In terms of biological role, transfers and isomerizes the ribose moiety from AdoMet to the 7-aminomethyl group of 7-deazaguanine (preQ1-tRNA) to give epoxyqueuosine (oQ-tRNA). This Hydrogenobaculum sp. (strain Y04AAS1) protein is S-adenosylmethionine:tRNA ribosyltransferase-isomerase.